Consider the following 735-residue polypeptide: Two pore calcium channel protein 1B (735 aa).

The Cytoplasmic portion of the chain corresponds to Met1–Asp76. A helical membrane pass occupies residues Phe77–Trp97. Residues Cys98 to Ser125 are Extracellular-facing. A helical transmembrane segment spans residues Leu126–Tyr146. At Glu147–Lys161 the chain is on the cytoplasmic side. A helical membrane pass occupies residues Val162–Phe182. Tyr183 is a topological domain (extracellular). The chain crosses the membrane as a helical; Voltage-sensor span at residues Tyr184–Ile202. The Cytoplasmic portion of the chain corresponds to Arg203–Ser208. The chain crosses the membrane as a helical span at residues Phe209–Phe229. At Leu230 to Lys248 the chain is on the extracellular side. The segment at residues Thr249–Val263 is an intramembrane region (pore-forming). Residues Leu264–Leu286 lie on the Extracellular side of the membrane. Residues Phe287–Val307 form a helical membrane-spanning segment. The Cytoplasmic portion of the chain corresponds to Tyr308–Arg431. 2 consecutive EF-hand domains span residues Leu325–Tyr360 and Ile366–Arg401. The helical transmembrane segment at Gly432 to Ile452 threads the bilayer. Residues Glu453–Val470 lie on the Extracellular side of the membrane. N-linked (GlcNAc...) asparagine glycosylation is present at Asn460. A helical transmembrane segment spans residues Glu471 to Phe491. At Glu492 to Arg501 the chain is on the cytoplasmic side. The chain crosses the membrane as a helical span at residues Phe502–Asp522. The Extracellular segment spans residues Asp523 to Glu531. The chain crosses the membrane as a helical; Voltage-sensor span at residues Trp532–Met549. Residues His550–Thr560 are Cytoplasmic-facing. Residues Phe561–Phe581 form a helical membrane-spanning segment. The Extracellular portion of the chain corresponds to Tyr582–Asp618. The pore-forming intramembrane region spans Tyr619–Gly633. Over Asn634–Tyr654 the chain is Extracellular. A helical membrane pass occupies residues Phe655–Leu675. Topologically, residues Glu676–Pro735 are cytoplasmic.

This sequence belongs to the calcium channel alpha-1 subunit (TC 1.A.1.11) family. Two pore calcium channel subfamily. In terms of assembly, homodimer.

The protein localises to the membrane. With respect to regulation, inhibited by Al(3+), La(3+) and Gd(3+). Up-regulated by H(2)O(2), cryptogein, salicylic acid (SA) and cold shock. Functions as a voltage-gated inward-rectifying Ca(2+) channel (VDCC) across the plasma membrane that mediates sucrose-induced Ca(2+) influx in autotrophically grown leaf cells. Acts as the major ROS-responsive Ca(2+) channel and is the possible target of Al-dependent inhibition. Plays a regulatory role in defense responses. The chain is Two pore calcium channel protein 1B (TPC1B) from Nicotiana tabacum (Common tobacco).